The chain runs to 224 residues: Perchlorate reductase assembly chaperone protein (224 aa).

The protein belongs to the type II DMSO reductase enzyme chaperone family.

It is found in the cytoplasm. Functionally, may function as a system-specific molybdenum chaperone protein essential for the assembly of the perchlorate reductase PcrAB complex prior to its periplasmic translocation via the Tat pathway. This is Perchlorate reductase assembly chaperone protein (pcrD) from Dechloromonas aromatica (strain RCB).